The chain runs to 72 residues: Large ribosomal subunit protein eL40 (72 aa).

Belongs to the eukaryotic ribosomal protein eL40 family.

The chain is Large ribosomal subunit protein eL40 from Nicotiana tabacum (Common tobacco).